The sequence spans 193 residues: Large ribosomal subunit protein uL18 (193 aa).

The protein belongs to the universal ribosomal protein uL18 family. As to quaternary structure, part of the 50S ribosomal subunit. Contacts the 5S and 23S rRNAs.

In terms of biological role, this is one of the proteins that bind and probably mediate the attachment of the 5S RNA into the large ribosomal subunit, where it forms part of the central protuberance. This Methanobrevibacter smithii (strain ATCC 35061 / DSM 861 / OCM 144 / PS) protein is Large ribosomal subunit protein uL18.